The chain runs to 345 residues: Heat-inducible transcription repressor HrcA (345 aa).

Belongs to the HrcA family.

Functionally, negative regulator of class I heat shock genes (grpE-dnaK-dnaJ and groELS operons). Prevents heat-shock induction of these operons. The chain is Heat-inducible transcription repressor HrcA from Corynebacterium diphtheriae (strain ATCC 700971 / NCTC 13129 / Biotype gravis).